Consider the following 176-residue polypeptide: Japanin (176 aa).

A signal peptide spans 1-24 (MKVLRCLVCSFYIIVSLITTMTIG). Position 47 (Glu-47) interacts with cholesterol. 2 disulfide bridges follow: Cys-52/Cys-174 and Cys-138/Cys-162. N-linked (GlcNAc...) asparagine glycosylation is found at Asn-59 and Asn-155.

Belongs to the calycin superfamily. Lipocalin family. In terms of assembly, homodimer; non-disulfide-linked. Each monomer accommodates one molecule of cholesterol in a pocket. In terms of tissue distribution, expressed in salivary glands.

It is found in the secreted. In terms of biological role, salivary tick protein that modulates host immune response. This protein blocks dendritic cell (DC) differentiation from monocytes. In addition, it inhibits up-regulation of costimulatory molecules and pro-inflammatory cytokines in response to stimuli and promotes up-regulation of co-inhibitory molecules and the anti-inflammatory cytokine interleukin-10. It has a pocket to accomodate cholesterol, which may have immune-modulatory roles, either directly or through interactions with the host gut microbiota. This chain is Japanin, found in Rhipicephalus appendiculatus (Brown ear tick).